The sequence spans 138 residues: MALLPDKEKLLRNFLRCANWEEKYLYIIELGQRLPELRDEDRSPQNSIQGCQSQVWIVMRQNAQGIIELQGDSDAAIVKGLIAVVFILYDQMTPQDIVNFDVRPWFEKMALTQHLTPSRSQGLEAMIRAIRAKAAALS.

C51 functions as the Cysteine persulfide intermediate in the catalytic mechanism.

The protein belongs to the SufE family. In terms of assembly, homodimer. Interacts with SufS.

The protein resides in the cytoplasm. The protein operates within cofactor biosynthesis; iron-sulfur cluster biosynthesis. Functionally, participates in cysteine desulfuration mediated by SufS. Cysteine desulfuration mobilizes sulfur from L-cysteine to yield L-alanine and constitutes an essential step in sulfur metabolism for biosynthesis of a variety of sulfur-containing biomolecules. Functions as a sulfur acceptor for SufS, by mediating the direct transfer of the sulfur atom from the S-sulfanylcysteine of SufS, an intermediate product of cysteine desulfuration process. In Escherichia coli (strain K12 / MC4100 / BW2952), this protein is Cysteine desulfuration protein SufE.